Consider the following 766-residue polypeptide: Single-minded homolog 1 (766 aa).

A bHLH domain is found at 1-53 (MKEKSKNAARTRREKENSEFYELAKLLPLPSAITSQLDKASIIRLTTSYLKMR). PAS domains follow at residues 77–147 (GREL…QPYH) and 218–288 (PPSA…LVKG). One can recognise a PAC domain in the interval 292–335 (TKYYRFLAKHGGWVWVQSYATIVHNSRSSRPHCIVSVNYVLTDT). The region spanning 336-766 (EYKGLQLSLD…GTSVIITNGS (431 aa)) is the Single-minded C-terminal domain. Residues 353–365 (AFSYTSSSTPTMT) show a composition bias toward polar residues. Disordered regions lie at residues 353 to 431 (AFSY…SQHD) and 528 to 563 (WDED…EPSK). The Nuclear localization signal signature appears at 368–387 (RKGAKSRLSSSKSKSRTSPY). Residues 373-385 (SRLSSSKSKSRTS) are compositionally biased toward low complexity. Over residues 394 to 404 (HTERSESDHDS) the composition is skewed to basic and acidic residues.

In terms of assembly, efficient DNA binding requires dimerization with another bHLH protein. Heterodimer; forms a heterodimer with ARNT, ARNT2.

Its subcellular location is the nucleus. Functionally, transcriptional factor that may have pleiotropic effects during embryogenesis and in the adult. The protein is Single-minded homolog 1 (SIM1) of Homo sapiens (Human).